The sequence spans 499 residues: Probable cytosol aminopeptidase (499 aa).

Mn(2+) is bound by residues Lys-267 and Asp-272. Lys-279 is a catalytic residue. The Mn(2+) site is built by Asp-290, Asp-349, and Glu-351. Residue Arg-353 is part of the active site.

This sequence belongs to the peptidase M17 family. Requires Mn(2+) as cofactor.

It localises to the cytoplasm. It carries out the reaction Release of an N-terminal amino acid, Xaa-|-Yaa-, in which Xaa is preferably Leu, but may be other amino acids including Pro although not Arg or Lys, and Yaa may be Pro. Amino acid amides and methyl esters are also readily hydrolyzed, but rates on arylamides are exceedingly low.. It catalyses the reaction Release of an N-terminal amino acid, preferentially leucine, but not glutamic or aspartic acids.. Functionally, presumably involved in the processing and regular turnover of intracellular proteins. Catalyzes the removal of unsubstituted N-terminal amino acids from various peptides. The polypeptide is Probable cytosol aminopeptidase (Alkaliphilus oremlandii (strain OhILAs) (Clostridium oremlandii (strain OhILAs))).